We begin with the raw amino-acid sequence, 124 residues long: Large ribosomal subunit protein bL12 (124 aa).

Belongs to the bacterial ribosomal protein bL12 family. As to quaternary structure, homodimer. Part of the ribosomal stalk of the 50S ribosomal subunit. Forms a multimeric L10(L12)X complex, where L10 forms an elongated spine to which 2 to 4 L12 dimers bind in a sequential fashion. Binds GTP-bound translation factors.

Forms part of the ribosomal stalk which helps the ribosome interact with GTP-bound translation factors. Is thus essential for accurate translation. This chain is Large ribosomal subunit protein bL12, found in Cereibacter sphaeroides (strain ATCC 17025 / ATH 2.4.3) (Rhodobacter sphaeroides).